Here is a 187-residue protein sequence, read N- to C-terminus: GTP cyclohydrolase 1 (187 aa).

Residues cysteine 78, histidine 81, and cysteine 150 each contribute to the Zn(2+) site.

This sequence belongs to the GTP cyclohydrolase I family. In terms of assembly, homomer.

The enzyme catalyses GTP + H2O = 7,8-dihydroneopterin 3'-triphosphate + formate + H(+). It participates in cofactor biosynthesis; 7,8-dihydroneopterin triphosphate biosynthesis; 7,8-dihydroneopterin triphosphate from GTP: step 1/1. This chain is GTP cyclohydrolase 1, found in Brevibacillus brevis (strain 47 / JCM 6285 / NBRC 100599).